Consider the following 182-residue polypeptide: Nudix hydrolase 17, mitochondrial (182 aa).

Residues M1–Q26 constitute a mitochondrion transit peptide. Positions V27 to V158 constitute a Nudix hydrolase domain. A Nudix box motif is present at residues G65–G86. Mg(2+)-binding residues include E80 and E84.

Belongs to the Nudix hydrolase family. Mg(2+) is required as a cofactor. The cofactor is Mn(2+). As to expression, expressed in roots, leaves, stems and inflorescences.

It is found in the mitochondrion. Probably mediates the hydrolysis of some nucleoside diphosphate derivatives. In Arabidopsis thaliana (Mouse-ear cress), this protein is Nudix hydrolase 17, mitochondrial (NUDT17).